A 354-amino-acid polypeptide reads, in one-letter code: 5,10-methenyltetrahydromethanopterin hydrogenase (354 aa).

This sequence belongs to the HMD family.

The catalysed reaction is 5,10-methenyl-5,6,7,8-tetrahydromethanopterin + H2 = 5,10-methylenetetrahydromethanopterin + H(+). It functions in the pathway one-carbon metabolism; methanogenesis from CO(2); 5,10-methylene-5,6,7,8-tetrahydromethanopterin from 5,10-methenyl-5,6,7,8-tetrahydromethanopterin (hydrogen route): step 1/1. Catalyzes the reversible reduction of methenyl-H(4)MPT(+) to methylene-H(4)MPT. In Methanococcus maripaludis (strain C7 / ATCC BAA-1331), this protein is 5,10-methenyltetrahydromethanopterin hydrogenase.